The primary structure comprises 303 residues: Aspartate carbamoyltransferase catalytic subunit (303 aa).

The carbamoyl phosphate site is built by Arg48 and Thr49. Residue Lys76 coordinates L-aspartate. The carbamoyl phosphate site is built by Arg98, His129, and Gln132. The L-aspartate site is built by Arg162 and Arg214. Carbamoyl phosphate is bound by residues Ala257 and Pro258.

It belongs to the aspartate/ornithine carbamoyltransferase superfamily. ATCase family. Heterododecamer (2C3:3R2) of six catalytic PyrB chains organized as two trimers (C3), and six regulatory PyrI chains organized as three dimers (R2).

It carries out the reaction carbamoyl phosphate + L-aspartate = N-carbamoyl-L-aspartate + phosphate + H(+). Its pathway is pyrimidine metabolism; UMP biosynthesis via de novo pathway; (S)-dihydroorotate from bicarbonate: step 2/3. In terms of biological role, catalyzes the condensation of carbamoyl phosphate and aspartate to form carbamoyl aspartate and inorganic phosphate, the committed step in the de novo pyrimidine nucleotide biosynthesis pathway. The protein is Aspartate carbamoyltransferase catalytic subunit of Leuconostoc citreum (strain KM20).